Reading from the N-terminus, the 406-residue chain is Endo-xylogalacturonan hydrolase A (406 aa).

The N-terminal stretch at 1–18 (MALYRNLYLLASLGLSSA) is a signal peptide. PbH1 repeat units lie at residues 183–213 (ATNVVFSNLKMDANSKSDNPPKNTDGFDIGE), 214–257 (STYV…SVGS), 266–289 (VKNIYVTGATMINSTKAAGIKTYP), 299–320 (VSNVTFNDFTVDNSDYAFQIQS), and 333–375 (PGNA…SISG). The active-site Proton donor is Asp-228. Residue His-251 is part of the active site. 2 N-linked (GlcNAc...) asparagine glycosylation sites follow: Asn-278 and Asn-301.

This sequence belongs to the glycosyl hydrolase 28 family.

The protein resides in the secreted. Functionally, pectinolytic enzyme involved in the degradation of xylogalacturonan (xga), a galacturonan backbone heavily substituted with xylose, and which is one important component of the hairy regions of pectin. Activity requires a galacturonic acid backbone substituted with xylose. The polypeptide is Endo-xylogalacturonan hydrolase A (xghA) (Aspergillus tubingensis).